A 396-amino-acid chain; its full sequence is Acetate kinase (396 aa).

Residue N7 coordinates Mg(2+). An ATP-binding site is contributed by K14. R88 provides a ligand contact to substrate. Residue D145 is the Proton donor/acceptor of the active site. Residues H205–G209, D279–R281, and G327–N331 contribute to the ATP site. E381 is a Mg(2+) binding site.

This sequence belongs to the acetokinase family. In terms of assembly, homodimer. It depends on Mg(2+) as a cofactor. Mn(2+) is required as a cofactor.

The protein resides in the cytoplasm. It carries out the reaction acetate + ATP = acetyl phosphate + ADP. Its pathway is metabolic intermediate biosynthesis; acetyl-CoA biosynthesis; acetyl-CoA from acetate: step 1/2. Its function is as follows. Catalyzes the formation of acetyl phosphate from acetate and ATP. Can also catalyze the reverse reaction. The sequence is that of Acetate kinase from Campylobacter jejuni subsp. doylei (strain ATCC BAA-1458 / RM4099 / 269.97).